A 544-amino-acid chain; its full sequence is Chaperonin GroEL (544 aa).

ATP contacts are provided by residues 29–32 (TMGP), Lys50, 86–90 (DGTTT), Gly414, 477–479 (NAA), and Asp493. Residues 525-544 (DKPAMPSMPDMGGMGMPGMM) are disordered.

It belongs to the chaperonin (HSP60) family. In terms of assembly, forms a cylinder of 14 subunits composed of two heptameric rings stacked back-to-back. Interacts with the co-chaperonin GroES.

The protein resides in the cytoplasm. It catalyses the reaction ATP + H2O + a folded polypeptide = ADP + phosphate + an unfolded polypeptide.. Functionally, together with its co-chaperonin GroES, plays an essential role in assisting protein folding. The GroEL-GroES system forms a nano-cage that allows encapsulation of the non-native substrate proteins and provides a physical environment optimized to promote and accelerate protein folding. The polypeptide is Chaperonin GroEL (Aliarcobacter butzleri (strain RM4018) (Arcobacter butzleri)).